The sequence spans 137 residues: Probable 4-amino-4-deoxy-L-arabinose-phosphoundecaprenol flippase subunit ArnF (137 aa).

At 1–3 (MNA) the chain is on the cytoplasmic side. Residues 4 to 24 (LRGWLAALGSMLLASAAQLGM) traverse the membrane as a helical segment. The Periplasmic segment spans residues 25 to 44 (RWGMSRLPLPEAWAGQTPER). A helical transmembrane segment spans residues 45–65 (AALLAVALAVAAYAASLLCWL). Topologically, residues 66–76 (AALRHLPLGRA) are cytoplasmic. The chain crosses the membrane as a helical span at residues 77–97 (YSLLSASYALVYLLAASLPAF). Residues 98–100 (DET) are Periplasmic-facing. A helical transmembrane segment spans residues 101 to 121 (FSTSKILGVGLVVLGVLTVNA). At 122–137 (RRTAAAPAHHPSRKAP) the chain is on the cytoplasmic side.

It belongs to the ArnF family. Heterodimer of ArnE and ArnF.

It localises to the cell inner membrane. Its pathway is bacterial outer membrane biogenesis; lipopolysaccharide biosynthesis. Its function is as follows. Translocates 4-amino-4-deoxy-L-arabinose-phosphoundecaprenol (alpha-L-Ara4N-phosphoundecaprenol) from the cytoplasmic to the periplasmic side of the inner membrane. This chain is Probable 4-amino-4-deoxy-L-arabinose-phosphoundecaprenol flippase subunit ArnF, found in Pseudomonas aeruginosa (strain LESB58).